The sequence spans 406 residues: Purine nucleoside permease (406 aa).

The first 22 residues, 1–22 (MKLSTLFTLATTISTLTTFTIA), serve as a signal peptide directing secretion.

The protein belongs to the NUP family. In terms of processing, predicted to be a substrate for cleavage by KEX2.

Its activity is regulated as follows. Mammalian nucleoside transport inhibitors dipyridamole and NBMPR inhibit adenosine transport by NUP. Its function is as follows. Nucleoside permease that transports adenosine and guanosine. Does not show any transport activities towards cytidine, adenine, guanine, uridine, and uracil. The chain is Purine nucleoside permease from Candida albicans (strain SC5314 / ATCC MYA-2876) (Yeast).